Consider the following 861-residue polypeptide: DNA topoisomerase 1 (861 aa).

Residues lysine 3–isoleucine 141 enclose the Toprim domain. Residues glutamate 9 and aspartate 110 each contribute to the Mg(2+) site. A Topo IA-type catalytic domain is found at asparagine 157–leucine 572. The tract at residues serine 191–glutamine 196 is interaction with DNA. The active-site O-(5'-phospho-DNA)-tyrosine intermediate is tyrosine 318. C4-type zinc fingers lie at residues cysteine 596–cysteine 628, cysteine 658–cysteine 685, and cysteine 707–cysteine 732.

The protein belongs to the type IA topoisomerase family. As to quaternary structure, monomer. Mg(2+) serves as cofactor.

It catalyses the reaction ATP-independent breakage of single-stranded DNA, followed by passage and rejoining.. Its function is as follows. Releases the supercoiling and torsional tension of DNA, which is introduced during the DNA replication and transcription, by transiently cleaving and rejoining one strand of the DNA duplex. Introduces a single-strand break via transesterification at a target site in duplex DNA. The scissile phosphodiester is attacked by the catalytic tyrosine of the enzyme, resulting in the formation of a DNA-(5'-phosphotyrosyl)-enzyme intermediate and the expulsion of a 3'-OH DNA strand. The free DNA strand then undergoes passage around the unbroken strand, thus removing DNA supercoils. Finally, in the religation step, the DNA 3'-OH attacks the covalent intermediate to expel the active-site tyrosine and restore the DNA phosphodiester backbone. The chain is DNA topoisomerase 1 from Buchnera aphidicola subsp. Acyrthosiphon pisum (strain APS) (Acyrthosiphon pisum symbiotic bacterium).